The chain runs to 366 residues: Carbamoyl phosphate synthase small chain (366 aa).

The interval 1–171 (MLEKRYLVLE…KTPYVSTGSD (171 aa)) is CPSase. L-glutamine contacts are provided by S47, G221, and G223. The 188-residue stretch at 173–360 (SVVLLDFGKK…IAMMKDFKEK (188 aa)) folds into the Glutamine amidotransferase type-1 domain. C248 serves as the catalytic Nucleophile. Positions 249, 252, 290, 292, and 293 each coordinate L-glutamine. Residues H333 and E335 contribute to the active site.

It belongs to the CarA family. As to quaternary structure, composed of two chains; the small (or glutamine) chain promotes the hydrolysis of glutamine to ammonia, which is used by the large (or ammonia) chain to synthesize carbamoyl phosphate. Tetramer of heterodimers (alpha,beta)4.

The catalysed reaction is hydrogencarbonate + L-glutamine + 2 ATP + H2O = carbamoyl phosphate + L-glutamate + 2 ADP + phosphate + 2 H(+). It catalyses the reaction L-glutamine + H2O = L-glutamate + NH4(+). The protein operates within amino-acid biosynthesis; L-arginine biosynthesis; carbamoyl phosphate from bicarbonate: step 1/1. Its pathway is pyrimidine metabolism; UMP biosynthesis via de novo pathway; (S)-dihydroorotate from bicarbonate: step 1/3. Small subunit of the glutamine-dependent carbamoyl phosphate synthetase (CPSase). CPSase catalyzes the formation of carbamoyl phosphate from the ammonia moiety of glutamine, carbonate, and phosphate donated by ATP, constituting the first step of 2 biosynthetic pathways, one leading to arginine and/or urea and the other to pyrimidine nucleotides. The small subunit (glutamine amidotransferase) binds and cleaves glutamine to supply the large subunit with the substrate ammonia. This chain is Carbamoyl phosphate synthase small chain, found in Staphylococcus epidermidis (strain ATCC 12228 / FDA PCI 1200).